A 304-amino-acid polypeptide reads, in one-letter code: Glucose-6-phosphate isomerase (304 aa).

The active-site Proton donor is Glu146. His177 is a catalytic residue.

The protein belongs to the GPI family.

The protein localises to the cytoplasm. It carries out the reaction alpha-D-glucose 6-phosphate = beta-D-fructose 6-phosphate. Its pathway is carbohydrate degradation; glycolysis; D-glyceraldehyde 3-phosphate and glycerone phosphate from D-glucose: step 2/4. This Calanus finmarchicus (Calanus tonsus) protein is Glucose-6-phosphate isomerase (PGI).